A 1017-amino-acid polypeptide reads, in one-letter code: Voltage-gated delayed rectifier potassium channel KCNH4 (1017 aa).

At 1–228 (MPVMKGLLAP…LLHYSVSKAI (228 aa)) the chain is on the cytoplasmic side. The region spanning 14–90 (FLDTIATRFD…QRLHKALEGH (77 aa)) is the PAS domain. The PAC domain maps to 93–145 (HRAEICFYRKDGSAFWCLLDMMPIKNEMGEVVLFLFSFKDITQSGSPGLGPQG). Residues 138–157 (SPGLGPQGGRGDSNHENSLG) are disordered. The span at 139–148 (PGLGPQGGRG) shows a compositional bias: gly residues. A helical membrane pass occupies residues 229–249 (WDGLILLATFYVAVTVPYNVC). The Extracellular segment spans residues 250–259 (FSGDDDTPIT). The helical transmembrane segment at 260–280 (SRHTLVSDIAVEMLFILDIIL) threads the bilayer. Over 281–302 (NFRTTYVSQSGQVISAPRSIGL) the chain is Cytoplasmic. A helical transmembrane segment spans residues 303 to 323 (HYLATWFFIDLIAALPFDLLY). Residues 324 to 332 (IFNITVTSL) are Extracellular-facing. N-linked (GlcNAc...) asparagine glycosylation is present at Asn-326. The chain crosses the membrane as a helical; Voltage-sensor span at residues 333-353 (VHLLKTVRLLRLLRLLQKLER). The Cytoplasmic segment spans residues 354 to 361 (YSQCSAVV). The chain crosses the membrane as a helical span at residues 362 to 382 (LTLLMSVFALLAHWMACIWYV). At 383-427 (IGRREMEANDPLLWDIGWLHELGKRLEVPYVNGSVGGPSRRSAYI) the chain is on the extracellular side. Residue Asn-414 is glycosylated (N-linked (GlcNAc...) asparagine). An intramembrane region (pore-forming) is located at residues 428 to 448 (AALYFTLSSLTSVGFGNVCAN). Residues 439–444 (SVGFGN) carry the Selectivity filter motif. Over 449-482 (TDAEKIFSICTMLIGALMHAVVFGNVTAIIQRMY) the chain is Extracellular. Asn-473 carries N-linked (GlcNAc...) asparagine glycosylation. Residues 483 to 503 (SRRSLYHSRMKDLKDFIRVHR) form a helical membrane-spanning segment. Topologically, residues 504 to 1017 (LPRPLKQRML…SFQSRSDTFH (514 aa)) are cytoplasmic. Residues 556–620 (LFGAASRGCL…AILGKGDLIG (65 aa)) form a cNMP-binding domain region. Polar residues predominate over residues 691–724 (GSDTSGLSRFSRSPRLSQPRSESLGSSSDKTLPS). Disordered stretches follow at residues 691-749 (GSDT…LPNL), 772-803 (LVSS…RCSA), 821-875 (PDLS…EAEE), and 971-1017 (LLDL…DTFH). Residues 772–787 (LVSSPSLSPSLSPALA) show a composition bias toward low complexity. Over residues 978–1002 (ILPPYPSEPDPLGPSPVPEASPPTP) the composition is skewed to pro residues. Residues 1008-1017 (SFQSRSDTFH) show a composition bias toward polar residues.

The protein belongs to the potassium channel family. H (Eag) (TC 1.A.1.20) subfamily. Kv12.3/KCNH4 sub-subfamily. The potassium channel is probably composed of a homo- or heterotetrameric complex of pore-forming alpha subunits that can associate with modulating beta subunits. As to expression, detected only in brain, in particular in the telencephalon. Detected in putamen and caudate nucleus, and at lower levels in cerebral cortex, occipital and hippocampus.

It localises to the membrane. It carries out the reaction K(+)(in) = K(+)(out). Pore-forming (alpha) subunit of a voltage-gated delayed rectifier. Activates at more negative voltages, exhibits fast prepulse-independent activation kinetics and deactivates much more slowly, but shows no inactivation. The protein is Voltage-gated delayed rectifier potassium channel KCNH4 of Homo sapiens (Human).